The primary structure comprises 47 residues: Putative beta-neurotoxin (47 aa).

One can recognise an LCN-type CS-alpha/beta domain in the interval 1 to 47 (KEGYMGSDGCKMSCVINDQFCDTECQAKLKGSTGYCYFXGLACYXXG). Disulfide bonds link cysteine 14–cysteine 36 and cysteine 21–cysteine 43.

In terms of tissue distribution, expressed by the venom gland.

It is found in the secreted. Causes transient paralysis of the rear legs of and spasms in insects (A.domestica). This is Putative beta-neurotoxin from Rhopalurus junceus (Caribbean blue scorpion).